The following is a 475-amino-acid chain: ATP synthase subunit beta (475 aa).

Position 155 to 162 (155 to 162 (GGAGVGKT)) interacts with ATP.

The protein belongs to the ATPase alpha/beta chains family. F-type ATPases have 2 components, CF(1) - the catalytic core - and CF(0) - the membrane proton channel. CF(1) has five subunits: alpha(3), beta(3), gamma(1), delta(1), epsilon(1). CF(0) has three main subunits: a(1), b(2) and c(9-12). The alpha and beta chains form an alternating ring which encloses part of the gamma chain. CF(1) is attached to CF(0) by a central stalk formed by the gamma and epsilon chains, while a peripheral stalk is formed by the delta and b chains.

Its subcellular location is the cell inner membrane. The catalysed reaction is ATP + H2O + 4 H(+)(in) = ADP + phosphate + 5 H(+)(out). Produces ATP from ADP in the presence of a proton gradient across the membrane. The catalytic sites are hosted primarily by the beta subunits. This is ATP synthase subunit beta from Rhizobium etli (strain CIAT 652).